A 495-amino-acid polypeptide reads, in one-letter code: Meiosis-specific nuclear structural protein 1 (495 aa).

Residues 1-315 (MASIRRTLSF…RLEEMLRQRE (315 aa)) form an interaction with BBOF1 region. Coiled-coil stretches lie at residues 61–215 (QDEQ…EKLM) and 245–361 (IEEF…QMAL). Positions 172–199 (EESAAEDKRNQAKAQYSHDLEKQLEEQG) are disordered.

It belongs to the MNS1 family. Able to form oligomers. Microtubule inner protein component of sperm flagellar doublet microtubules. Interacts with ODAD1. Interacts with BBOF1. In terms of tissue distribution, expressed in trachea multiciliated cells.

Its subcellular location is the nucleus. It is found in the cytoplasm. The protein localises to the cytoskeleton. The protein resides in the cilium axoneme. It localises to the flagellum axoneme. Functionally, microtubule inner protein (MIP) part of the dynein-decorated doublet microtubules (DMTs) in cilia axoneme, which is required for motile cilia beating. May play a role in the control of meiotic division and germ cell differentiation through regulation of pairing and recombination during meiosis. Required for sperm flagella assembly. May play a role in the assembly and function of the outer dynein arm-docking complex (ODA-DC). ODA-DC mediates outer dynein arms (ODA) binding onto the axonemal doublet microtubules. This Bos taurus (Bovine) protein is Meiosis-specific nuclear structural protein 1 (MNS1).